Reading from the N-terminus, the 142-residue chain is MAP3K7 C-terminal-like protein (142 aa).

In terms of tissue distribution, detected in lung and peripheral blood leukocytes. Expressed predominantly in peripheral blood leukocytes and ubiquitously in adult and fetal tissues. Also expressed strongly in breast carcinoma GI-101, colon adenocarcinoma GI-112, and prostatic adenocarcinoma PC3.

This is MAP3K7 C-terminal-like protein (MAP3K7CL) from Homo sapiens (Human).